Consider the following 182-residue polypeptide: UPF0149 protein HI_0817 (182 aa).

This sequence belongs to the UPF0149 family.

The protein is UPF0149 protein HI_0817 of Haemophilus influenzae (strain ATCC 51907 / DSM 11121 / KW20 / Rd).